The sequence spans 379 residues: Cytochrome b (379 aa).

A run of 4 helical transmembrane segments spans residues 33-53 (LGSL…FLAM), 77-98 (WTIR…YLHI), 113-133 (WNTG…GYVL), and 178-198 (FFTL…THLL). Positions 83 and 97 each coordinate heme b. Residues histidine 182 and histidine 196 each contribute to the heme b site. Histidine 201 is an a ubiquinone binding site. 4 helical membrane-spanning segments follow: residues 226-246 (IKDI…TLLH), 288-308 (LGGV…PMTH), 320-340 (ISQC…WIGG), and 347-367 (FTTI…ILTP).

This sequence belongs to the cytochrome b family. The cytochrome bc1 complex contains 11 subunits: 3 respiratory subunits (MT-CYB, CYC1 and UQCRFS1), 2 core proteins (UQCRC1 and UQCRC2) and 6 low-molecular weight proteins (UQCRH/QCR6, UQCRB/QCR7, UQCRQ/QCR8, UQCR10/QCR9, UQCR11/QCR10 and a cleavage product of UQCRFS1). This cytochrome bc1 complex then forms a dimer. Requires heme b as cofactor.

The protein resides in the mitochondrion inner membrane. In terms of biological role, component of the ubiquinol-cytochrome c reductase complex (complex III or cytochrome b-c1 complex) that is part of the mitochondrial respiratory chain. The b-c1 complex mediates electron transfer from ubiquinol to cytochrome c. Contributes to the generation of a proton gradient across the mitochondrial membrane that is then used for ATP synthesis. The protein is Cytochrome b (MT-CYB) of Bradypus tridactylus (Pale-throated three-toed sloth).